A 350-amino-acid chain; its full sequence is Erythronate-4-phosphate dehydrogenase (350 aa).

Residues serine 45 and threonine 66 each contribute to the substrate site. NAD(+)-binding positions include glutamine 124–valine 125, aspartate 144, alanine 203–arginine 205, and aspartate 226. Arginine 205 is an active-site residue. Residue glutamate 231 is part of the active site. Histidine 248 functions as the Proton donor in the catalytic mechanism. Glycine 251 contacts NAD(+).

It belongs to the D-isomer specific 2-hydroxyacid dehydrogenase family. PdxB subfamily. As to quaternary structure, homodimer.

The protein localises to the cytoplasm. It carries out the reaction 4-phospho-D-erythronate + NAD(+) = (R)-3-hydroxy-2-oxo-4-phosphooxybutanoate + NADH + H(+). It participates in cofactor biosynthesis; pyridoxine 5'-phosphate biosynthesis; pyridoxine 5'-phosphate from D-erythrose 4-phosphate: step 2/5. Catalyzes the oxidation of erythronate-4-phosphate to 3-hydroxy-2-oxo-4-phosphonooxybutanoate. This Legionella pneumophila subsp. pneumophila (strain Philadelphia 1 / ATCC 33152 / DSM 7513) protein is Erythronate-4-phosphate dehydrogenase.